Consider the following 150-residue polypeptide: uncharacterized protein (150 aa).

This is an uncharacterized protein from Mycoplasma pneumoniae (strain ATCC 29342 / M129 / Subtype 1) (Mycoplasmoides pneumoniae).